Consider the following 281-residue polypeptide: Octanoyl-[GcvH]:protein N-octanoyltransferase (281 aa).

One can recognise a BPL/LPL catalytic domain in the interval Gly-44–Thr-250. Catalysis depends on Cys-149, which acts as the Acyl-thioester intermediate.

It belongs to the octanoyltransferase LipL family.

It catalyses the reaction N(6)-octanoyl-L-lysyl-[glycine-cleavage complex H protein] + L-lysyl-[lipoyl-carrier protein] = N(6)-octanoyl-L-lysyl-[lipoyl-carrier protein] + L-lysyl-[glycine-cleavage complex H protein]. Its pathway is protein modification; protein lipoylation via endogenous pathway; protein N(6)-(lipoyl)lysine from octanoyl-[acyl-carrier-protein]. Catalyzes the amidotransfer (transamidation) of the octanoyl moiety from octanoyl-GcvH to the lipoyl domain of the E2 subunit of lipoate-dependent enzymes. The polypeptide is Octanoyl-[GcvH]:protein N-octanoyltransferase (Bacillus anthracis).